Reading from the N-terminus, the 238-residue chain is Ribosomal RNA small subunit methyltransferase G (238 aa).

S-adenosyl-L-methionine-binding positions include Gly-77, Phe-82, 128–129 (AE), and Arg-147. The tract at residues 219 to 238 (KKTPARYPRKPGTPNKQPIQ) is disordered.

The protein belongs to the methyltransferase superfamily. RNA methyltransferase RsmG family.

Its subcellular location is the cytoplasm. In terms of biological role, specifically methylates the N7 position of guanine in position 535 of 16S rRNA. This chain is Ribosomal RNA small subunit methyltransferase G, found in Geobacillus thermodenitrificans (strain NG80-2).